Consider the following 273-residue polypeptide: Dermonecrotic toxin LhSicTox-alphaIA2avii (273 aa).

Residue His-5 is part of the active site. Residues Glu-25 and Asp-27 each coordinate Mg(2+). The active-site Nucleophile is His-41. 2 disulfide bridges follow: Cys-45/Cys-51 and Cys-47/Cys-190. Asp-85 lines the Mg(2+) pocket.

This sequence belongs to the arthropod phospholipase D family. Class II subfamily. Requires Mg(2+) as cofactor. As to expression, expressed by the venom gland.

Its subcellular location is the secreted. It carries out the reaction an N-(acyl)-sphingosylphosphocholine = an N-(acyl)-sphingosyl-1,3-cyclic phosphate + choline. The catalysed reaction is an N-(acyl)-sphingosylphosphoethanolamine = an N-(acyl)-sphingosyl-1,3-cyclic phosphate + ethanolamine. It catalyses the reaction a 1-acyl-sn-glycero-3-phosphocholine = a 1-acyl-sn-glycero-2,3-cyclic phosphate + choline. The enzyme catalyses a 1-acyl-sn-glycero-3-phosphoethanolamine = a 1-acyl-sn-glycero-2,3-cyclic phosphate + ethanolamine. In terms of biological role, dermonecrotic toxins cleave the phosphodiester linkage between the phosphate and headgroup of certain phospholipids (sphingolipid and lysolipid substrates), forming an alcohol (often choline) and a cyclic phosphate. This toxin acts on sphingomyelin (SM). It may also act on ceramide phosphoethanolamine (CPE), lysophosphatidylcholine (LPC) and lysophosphatidylethanolamine (LPE), but not on lysophosphatidylserine (LPS), and lysophosphatidylglycerol (LPG). It acts by transphosphatidylation, releasing exclusively cyclic phosphate products as second products. Induces dermonecrosis, hemolysis, increased vascular permeability, edema, inflammatory response, and platelet aggregation. This is Dermonecrotic toxin LhSicTox-alphaIA2avii from Loxosceles hirsuta (Recluse spider).